A 292-amino-acid polypeptide reads, in one-letter code: uncharacterized protein (292 aa).

Residues T43 and Y105 each act as charge relay system in the active site. The Proton donor role is filled by Y131. Catalysis depends on K159, which acts as the Schiff-base intermediate with substrate.

It belongs to the DapA family. Homotetramer.

The protein localises to the cytoplasm. This is an uncharacterized protein from Thermococcus kodakarensis (strain ATCC BAA-918 / JCM 12380 / KOD1) (Pyrococcus kodakaraensis (strain KOD1)).